Reading from the N-terminus, the 313-residue chain is Biotin synthase (313 aa).

Positions 37-263 (YYGKKVKLNM…INPTKEIRIA (227 aa)) constitute a Radical SAM core domain. The [4Fe-4S] cluster site is built by Cys55, Cys59, and Cys62. Residues Cys98, Cys131, Cys191, and Arg261 each contribute to the [2Fe-2S] cluster site.

This sequence belongs to the radical SAM superfamily. Biotin synthase family. Homodimer. [4Fe-4S] cluster is required as a cofactor. The cofactor is [2Fe-2S] cluster.

The catalysed reaction is (4R,5S)-dethiobiotin + (sulfur carrier)-SH + 2 reduced [2Fe-2S]-[ferredoxin] + 2 S-adenosyl-L-methionine = (sulfur carrier)-H + biotin + 2 5'-deoxyadenosine + 2 L-methionine + 2 oxidized [2Fe-2S]-[ferredoxin]. It participates in cofactor biosynthesis; biotin biosynthesis; biotin from 7,8-diaminononanoate: step 2/2. Its function is as follows. Catalyzes the conversion of dethiobiotin (DTB) to biotin by the insertion of a sulfur atom into dethiobiotin via a radical-based mechanism. This chain is Biotin synthase, found in Staphylococcus epidermidis (strain ATCC 12228 / FDA PCI 1200).